The chain runs to 284 residues: RNase adapter protein RapZ (284 aa).

8 to 15 contacts ATP; that stretch reads GRSGSGKS. Position 56–59 (56–59) interacts with GTP; sequence DVRN. Positions 266 to 284 are RNA-binding; the sequence is RSRGKNVQSRHRTLEKRKS.

It belongs to the RapZ-like family. RapZ subfamily. In terms of assembly, homotrimer.

Modulates the synthesis of GlmS, by affecting the processing and stability of the regulatory small RNA GlmZ. When glucosamine-6-phosphate (GlcN6P) concentrations are high in the cell, RapZ binds GlmZ and targets it to cleavage by RNase E. Consequently, GlmZ is inactivated and unable to activate GlmS synthesis. Under low GlcN6P concentrations, RapZ is sequestered and inactivated by an other regulatory small RNA, GlmY, preventing GlmZ degradation and leading to synthesis of GlmS. The chain is RNase adapter protein RapZ from Klebsiella oxytoca.